The primary structure comprises 269 residues: MAGQRAPHLHLAELSASQFLDVWRHFDADGNGYIEGKELENFFQELESARKGTGVDSKRDSLGDKMKEFMHKYDKNADGKIEMAELAQILPTEENFLLCFRQHVGSSSEFMEAWRRYDTDRSGYIEANELKGFLSDLLKKANRPYDEAKLQEYTQTILRMFDMNGDGKLGLSEMSRLLPVQENFLLKFQGMKLSSEEFNAIFAFYDKDGSGFIDEHELDALLKDLYEKNKKEMSIQQLTNYRRSIMNLSDGGKLYRKELEVVLCSEPPL.

EF-hand domains are found at residues 14 to 49, 61 to 96, 105 to 140, 149 to 184, 193 to 228, and 230 to 265; these read LSASQFLDVWRHFDADGNGYIEGKELENFFQELESA, SLGDKMKEFMHKYDKNADGKIEMAELAQILPTEENF, GSSSEFMEAWRRYDTDRSGYIEANELKGFLSDLLKK, KLQEYTQTILRMFDMNGDGKLGLSEMSRLLPVQENF, LSSEEFNAIFAFYDKDGSGFIDEHELDALLKDLYEK, and KKEMSIQQLTNYRRSIMNLSDGGKLYRKELEVVLCS. Asp27, Asp29, Asn31, Tyr33, Glu38, Asp74, Asn76, Asp78, Lys80, Glu85, Asp118, Asp120, Ser122, Tyr124, Glu129, Asp162, Asn164, Asp166, Lys168, Glu173, Asp206, Asp208, Ser210, and Glu217 together coordinate Ca(2+).

The protein belongs to the calbindin family.

The protein resides in the synapse. It localises to the cell projection. Its subcellular location is the dendrite. Calcium-binding protein involved in calcium homeostasis and signal transduction. It plays a critical role in buffering intracellular calcium levels and modulating calcium-dependent signaling pathways. Predominantly expressed in specific neuronal populations, influences synaptic plasticity and neuronal excitability, contributing to learning and memory. During embryonic development, it facilitates neuronal differentiation and maturation. The polypeptide is Calretinin (CALB2) (Gallus gallus (Chicken)).